We begin with the raw amino-acid sequence, 457 residues long: Choline kinase alpha (457 aa).

A disordered region spans residues 1–86; it reads MKTKFCTGGE…PPADEQPEPR (86 aa). The segment covering 13–32 has biased composition (low complexity); that stretch reads PSPLGLLLSCGSGSAAPAPG. The segment covering 55-80 has biased composition (pro residues); it reads LALPPPPPLPLPLPLPQPPPPQPPAD. Residues 117-123, Arg-146, and 207-213 each bind ATP; these read RGGLSNM and QFIPSRR. 119-121 is a phosphocholine binding site; it reads GLS. Lys-247 carries the N6-acetyllysine modification. A Phosphoserine modification is found at Ser-279. ATP contacts are provided by Gln-308 and Asp-330.

The protein belongs to the choline/ethanolamine kinase family. In terms of assembly, homodimer. Heterodimer with CHKB. As to quaternary structure, monomer; acetylation by KAT5 promotes dissociation of the homodimer and monomerization. (Microbial infection) Interacts with PI4KA/PI4KIIIalpha; CHKA bridges PI4KA/PI4KIIIalpha and hepatitis C virus (HCV) non-structural protein 5A (NS5A) and potentiates NS5A-stimulated PI4KA activity, which then facilitates the targeting of the ternary complex to the ER for viral replication. In terms of processing, phosphorylated at Ser-279 by AMPK in response to glucose deprivation, leading to localization to lipid droplets. Acetylated by KAT5 at Lys-247 following phosphorylation by AMPK, leading to monomerization and conversion into a tyrosine-protein kinase.

It is found in the cytoplasm. It localises to the cytosol. The protein resides in the lipid droplet. The enzyme catalyses choline + ATP = phosphocholine + ADP + H(+). It carries out the reaction ethanolamine + ATP = phosphoethanolamine + ADP + H(+). The catalysed reaction is L-tyrosyl-[protein] + ATP = O-phospho-L-tyrosyl-[protein] + ADP + H(+). It participates in phospholipid metabolism; phosphatidylcholine biosynthesis; phosphocholine from choline: step 1/1. It functions in the pathway phospholipid metabolism; phosphatidylethanolamine biosynthesis; phosphatidylethanolamine from ethanolamine: step 1/3. Homodimerization or heterodimerization is required for the choline and ethanolamine kinase activities. Functionally, plays a key role in phospholipid biosynthesis by catalyzing the phosphorylation of free choline to phosphocholine, the first step in phosphatidylcholine biosynthesis. Also phosphorylates ethanolamine, thereby contributing to phosphatidylethanolamine biosynthesis. Has higher activity with choline. May contribute to tumor cell growth. Its function is as follows. This isoform plays a key role in lipolysis of lipid droplets following glucose deprivation. In response to glucose deprivation, phosphorylated by AMPK, promoting localization to lipid droplets. Phosphorylation is followed by acetylation by KAT5, leading to dissociation of the homodimer into a monomer. Monomeric CHKA isoform 1 is converted into a tyrosine-protein kinase, which phosphorylates lipid droplet structural proteins PLIN2 and PLIN3, leading to lipolysis of lipid droplets. This Homo sapiens (Human) protein is Choline kinase alpha (CHKA).